The chain runs to 312 residues: MENYNQTSTDFILLGLFPQSRIGLFVFTLIFLIFLMALIGNLSMILLIFLDIHLHTPMYFLLSQLSLIDLNYISTIVPKMVYDFLYGNKSISFTGCGIQSFFFLTLAVAEGLLLTSMAYDRYVAICFPLHYPIRISKRVCVMMITGSWMISSINSCAHTVYALCIPYCKSRAINHFFCDVPAMLTLACTDTWVYESTVFLSSTIFLVLPFTGIACSYGRVLLAVYRMHSAEGRKKAYSTCSTHLTVVSFYYAPFAYTYVRPRSLRSPTEDKILAVFYTILTPMLNPIIYSLRNKEVMGALTQVIQKIFSVKM.

Residues 1-24 are Extracellular-facing; the sequence is MENYNQTSTDFILLGLFPQSRIGL. Asparagine 5 carries N-linked (GlcNAc...) asparagine glycosylation. Residues 25–48 form a helical membrane-spanning segment; it reads FVFTLIFLIFLMALIGNLSMILLI. Residues 49–56 lie on the Cytoplasmic side of the membrane; that stretch reads FLDIHLHT. A helical membrane pass occupies residues 57–78; it reads PMYFLLSQLSLIDLNYISTIVP. Over 79–99 the chain is Extracellular; sequence KMVYDFLYGNKSISFTGCGIQ. Asparagine 88 carries an N-linked (GlcNAc...) asparagine glycan. Cysteine 96 and cysteine 188 are oxidised to a cystine. The helical transmembrane segment at 100-119 threads the bilayer; the sequence is SFFFLTLAVAEGLLLTSMAY. Topologically, residues 120-138 are cytoplasmic; it reads DRYVAICFPLHYPIRISKR. The helical transmembrane segment at 139 to 157 threads the bilayer; the sequence is VCVMMITGSWMISSINSCA. The Extracellular segment spans residues 158-194; the sequence is HTVYALCIPYCKSRAINHFFCDVPAMLTLACTDTWVY. The chain crosses the membrane as a helical span at residues 195–218; the sequence is ESTVFLSSTIFLVLPFTGIACSYG. The Cytoplasmic portion of the chain corresponds to 219–235; sequence RVLLAVYRMHSAEGRKK. A helical membrane pass occupies residues 236 to 258; the sequence is AYSTCSTHLTVVSFYYAPFAYTY. Over 259-271 the chain is Extracellular; that stretch reads VRPRSLRSPTEDK. Residues 272–291 form a helical membrane-spanning segment; the sequence is ILAVFYTILTPMLNPIIYSL. The Cytoplasmic segment spans residues 292-312; the sequence is RNKEVMGALTQVIQKIFSVKM.

The protein belongs to the G-protein coupled receptor 1 family.

The protein localises to the cell membrane. Its function is as follows. Odorant receptor. The chain is Olfactory receptor 2L2 (OR2L2) from Homo sapiens (Human).